The following is a 289-amino-acid chain: Lipoyl synthase (289 aa).

[4Fe-4S] cluster-binding residues include Cys33, Cys38, Cys44, Cys59, Cys63, Cys66, and Ser274. A Radical SAM core domain is found at 45-263; it reads FAGGTATFLI…SQGESELGFL (219 aa).

It belongs to the radical SAM superfamily. Lipoyl synthase family. Requires [4Fe-4S] cluster as cofactor.

The protein resides in the cytoplasm. The catalysed reaction is [[Fe-S] cluster scaffold protein carrying a second [4Fe-4S](2+) cluster] + N(6)-octanoyl-L-lysyl-[protein] + 2 oxidized [2Fe-2S]-[ferredoxin] + 2 S-adenosyl-L-methionine + 4 H(+) = [[Fe-S] cluster scaffold protein] + N(6)-[(R)-dihydrolipoyl]-L-lysyl-[protein] + 4 Fe(3+) + 2 hydrogen sulfide + 2 5'-deoxyadenosine + 2 L-methionine + 2 reduced [2Fe-2S]-[ferredoxin]. Its pathway is protein modification; protein lipoylation via endogenous pathway; protein N(6)-(lipoyl)lysine from octanoyl-[acyl-carrier-protein]: step 2/2. In terms of biological role, catalyzes the radical-mediated insertion of two sulfur atoms into the C-6 and C-8 positions of the octanoyl moiety bound to the lipoyl domains of lipoate-dependent enzymes, thereby converting the octanoylated domains into lipoylated derivatives. This chain is Lipoyl synthase, found in Synechococcus sp. (strain RCC307).